A 583-amino-acid polypeptide reads, in one-letter code: Threonine--tRNA ligase (583 aa).

A catalytic region spans residues 185–478 (DHRKLGRELN…LVEHYGGAFP (294 aa)). Residues C278, H329, and H455 each coordinate Zn(2+).

Belongs to the class-II aminoacyl-tRNA synthetase family. Homodimer. Zn(2+) serves as cofactor.

The protein resides in the cytoplasm. The enzyme catalyses tRNA(Thr) + L-threonine + ATP = L-threonyl-tRNA(Thr) + AMP + diphosphate + H(+). Functionally, catalyzes the attachment of threonine to tRNA(Thr) in a two-step reaction: L-threonine is first activated by ATP to form Thr-AMP and then transferred to the acceptor end of tRNA(Thr). Also edits incorrectly charged L-seryl-tRNA(Thr). The chain is Threonine--tRNA ligase from Borrelia duttonii (strain Ly).